A 288-amino-acid chain; its full sequence is Pantothenate synthetase (288 aa).

30–37 serves as a coordination point for ATP; the sequence is MGFLHEGH. The active-site Proton donor is the His-37. Residue Gln-61 coordinates (R)-pantoate. Position 61 (Gln-61) interacts with beta-alanine. 147–150 serves as a coordination point for ATP; sequence GMKD. Gln-153 contacts (R)-pantoate. ATP is bound at residue 184-187; the sequence is KSSR.

It belongs to the pantothenate synthetase family. As to quaternary structure, homodimer.

It localises to the cytoplasm. The enzyme catalyses (R)-pantoate + beta-alanine + ATP = (R)-pantothenate + AMP + diphosphate + H(+). The protein operates within cofactor biosynthesis; (R)-pantothenate biosynthesis; (R)-pantothenate from (R)-pantoate and beta-alanine: step 1/1. In terms of biological role, catalyzes the condensation of pantoate with beta-alanine in an ATP-dependent reaction via a pantoyl-adenylate intermediate. The sequence is that of Pantothenate synthetase from Bacillus licheniformis (strain ATCC 14580 / DSM 13 / JCM 2505 / CCUG 7422 / NBRC 12200 / NCIMB 9375 / NCTC 10341 / NRRL NRS-1264 / Gibson 46).